Consider the following 63-residue polypeptide: Large ribosomal subunit protein uL29 (63 aa).

This sequence belongs to the universal ribosomal protein uL29 family.

The sequence is that of Large ribosomal subunit protein uL29 from Yersinia enterocolitica serotype O:8 / biotype 1B (strain NCTC 13174 / 8081).